The primary structure comprises 89 residues: Small ribosomal subunit protein bS20 (89 aa).

The segment at 1 to 28 (MTLANIKSAKKRAVQSEKRRQHNASQRS) is disordered.

The protein belongs to the bacterial ribosomal protein bS20 family.

In terms of biological role, binds directly to 16S ribosomal RNA. The polypeptide is Small ribosomal subunit protein bS20 (Haemophilus ducreyi (strain 35000HP / ATCC 700724)).